Reading from the N-terminus, the 337-residue chain is MKLAVIPGDGIGVEVTAEALKVLGKLVPDLETTEYDLGARRYNATGELLPADELDQIRQHDAILLGAIGDPRIVAPGILERGLLLNMRFQLDHHVNLRPAQLYPGALSPLAAQPEIDFVVVREGTEGPYTGNGGAIRVGTDHEIATEVSINTWFGAERVVRYAFALAQTRSKHLTLIHKTNVLSNAGAIWTRAIETVGAEYPDVETAYCHIDAATIYMVTDPSRFDVIVTDNLFGDIITDLAGAVTGGIGLAASGNIDASGTNPSMFEPVHGSAPDIAGKGIADPTAAILSAALLLRHLGREDDAARVEAVVAADLATRGEGPISTTEIGDRITAAL.

Residues arginine 88, arginine 98, arginine 122, and aspartate 212 each coordinate substrate. Positions 212, 236, and 240 each coordinate Mg(2+). 272 to 284 (GSAPDIAGKGIAD) contacts NAD(+).

This sequence belongs to the isocitrate and isopropylmalate dehydrogenases family. LeuB type 2 subfamily. As to quaternary structure, homodimer. Mg(2+) is required as a cofactor. Mn(2+) serves as cofactor.

The protein localises to the cytoplasm. The enzyme catalyses (2R,3S)-3-isopropylmalate + NAD(+) = 4-methyl-2-oxopentanoate + CO2 + NADH. Its pathway is amino-acid biosynthesis; L-leucine biosynthesis; L-leucine from 3-methyl-2-oxobutanoate: step 3/4. Catalyzes the oxidation of 3-carboxy-2-hydroxy-4-methylpentanoate (3-isopropylmalate) to 3-carboxy-4-methyl-2-oxopentanoate. The product decarboxylates to 4-methyl-2 oxopentanoate. The polypeptide is 3-isopropylmalate dehydrogenase (Rhodococcus erythropolis (strain PR4 / NBRC 100887)).